We begin with the raw amino-acid sequence, 255 residues long: DNA repair protein RecO (255 aa).

This sequence belongs to the RecO family.

Involved in DNA repair and RecF pathway recombination. The polypeptide is DNA repair protein RecO (Acidithiobacillus ferrooxidans (strain ATCC 23270 / DSM 14882 / CIP 104768 / NCIMB 8455) (Ferrobacillus ferrooxidans (strain ATCC 23270))).